Here is a 631-residue protein sequence, read N- to C-terminus: Phosphomethylpyrimidine synthase (631 aa).

Substrate contacts are provided by residues asparagine 239, methionine 268, tyrosine 297, histidine 333, 353-355 (SRG), 394-397 (DGLR), and glutamate 433. Histidine 437 serves as a coordination point for Zn(2+). Tyrosine 460 lines the substrate pocket. A Zn(2+)-binding site is contributed by histidine 501. 3 residues coordinate [4Fe-4S] cluster: cysteine 581, cysteine 584, and cysteine 589.

The protein belongs to the ThiC family. As to quaternary structure, homodimer. Requires [4Fe-4S] cluster as cofactor.

It carries out the reaction 5-amino-1-(5-phospho-beta-D-ribosyl)imidazole + S-adenosyl-L-methionine = 4-amino-2-methyl-5-(phosphooxymethyl)pyrimidine + CO + 5'-deoxyadenosine + formate + L-methionine + 3 H(+). It participates in cofactor biosynthesis; thiamine diphosphate biosynthesis. Its function is as follows. Catalyzes the synthesis of the hydroxymethylpyrimidine phosphate (HMP-P) moiety of thiamine from aminoimidazole ribotide (AIR) in a radical S-adenosyl-L-methionine (SAM)-dependent reaction. This is Phosphomethylpyrimidine synthase from Escherichia coli (strain SMS-3-5 / SECEC).